Reading from the N-terminus, the 211-residue chain is Thymidylate kinase (211 aa).

11-18 (GPDGAGKT) contributes to the ATP binding site.

The protein belongs to the thymidylate kinase family.

The catalysed reaction is dTMP + ATP = dTDP + ADP. Phosphorylation of dTMP to form dTDP in both de novo and salvage pathways of dTTP synthesis. The protein is Thymidylate kinase of Streptococcus pyogenes serotype M6 (strain ATCC BAA-946 / MGAS10394).